We begin with the raw amino-acid sequence, 754 residues long: MTLNQLLQKLEATSPILQANFGIERESLRVDRQGQLVHTPHPSCLGARSFHPYIQTDFCEFQMELITPVAKSTTEARRFLGAITDVAGRSIATDEVLWPLSMPPRLKAEEIQVAQLENDFERHYRNYLAEKYGTKLQAISGIHYNMELGKDLVEALFQESDQTDMIAFKNALYLKLAQNYLRYRWVITYLFGASPIAEQGFFDQEVPEPMRSFRNSDHGYVNKEEIQVSFVSLEDYVSAIETYIEQGDLIAEKEFYSAVRFRGQKVNRSFLDKGITYLEFRNFDLNPFERIGISQTTMDTVHLLILAFLWLDSPENVDQALAQGHALNEKIALSHPLEPLPSEAKTQDIVTALDQLVQHFGLGDYHQDLVKQVKAAFADPNQTLSAQLLPYIKDKSLAEFALNKALAYHDYDWTAHYALKGYEEMELSTQMLLFDAIQKGIHFEILDEQDQFLKLWHQDHVEYVKNGNMTSKDNYVVPLAMANKTVTKKILADASFPVPSGDEFTSLEEGLAYYPLIKDKQIVVKPKSTNFGLGISIFQEPASLDNYQKALEIAFAEDTSVLVEEFIPGTEYRFFILDGRCEAVLLRVAANVIGDGKHTIRELVAQKNANPLRGRDHRSPLEIIELGDIEQLMLAQQGYTPDDILPEGKKVNLRRNSNISTGGDSIDVTETMDSSYQELAAAMATSMGAWACGVDLIIPDETQIATKENPHCTCIELNFNPSMYMHTYCAEGPGQAITTKILDKLFPEIVAGQT.

A glutamate--cysteine ligase region spans residues 1–332 (MTLNQLLQKL…QGHALNEKIA (332 aa)). The 259-residue stretch at 488–746 (KKILADASFP…ITTKILDKLF (259 aa)) folds into the ATP-grasp domain. 515–573 (PLIKDKQIVVKPKSTNFGLGISIFQEPASLDNYQKALEIAFAEDTSVLVEEFIPGTEYR) contributes to the ATP binding site. Asp-695, Glu-716, and Asn-718 together coordinate Mg(2+). Positions 695, 716, and 718 each coordinate Mn(2+).

This sequence in the N-terminal section; belongs to the glutamate--cysteine ligase type 1 family. Type 2 subfamily. In terms of assembly, monomer. It depends on Mg(2+) as a cofactor. Requires Mn(2+) as cofactor.

The enzyme catalyses L-cysteine + L-glutamate + ATP = gamma-L-glutamyl-L-cysteine + ADP + phosphate + H(+). It catalyses the reaction gamma-L-glutamyl-L-cysteine + glycine + ATP = glutathione + ADP + phosphate + H(+). It functions in the pathway sulfur metabolism; glutathione biosynthesis; glutathione from L-cysteine and L-glutamate: step 1/2. Its pathway is sulfur metabolism; glutathione biosynthesis; glutathione from L-cysteine and L-glutamate: step 2/2. In terms of biological role, synthesizes glutathione from L-glutamate and L-cysteine via gamma-L-glutamyl-L-cysteine. In Streptococcus thermophilus (strain ATCC BAA-250 / LMG 18311), this protein is Glutathione biosynthesis bifunctional protein GshAB.